A 178-amino-acid chain; its full sequence is Oligoribonuclease (178 aa).

An Exonuclease domain is found at 7–168; sequence LIWIDLEMTG…DDIRESIAEL (162 aa). Residue Tyr-128 is part of the active site.

This sequence belongs to the oligoribonuclease family.

It is found in the cytoplasm. In terms of biological role, 3'-to-5' exoribonuclease specific for small oligoribonucleotides. The chain is Oligoribonuclease from Francisella tularensis subsp. tularensis (strain FSC 198).